Reading from the N-terminus, the 123-residue chain is D-ribose pyranase (123 aa).

The Proton donor role is filled by H20. Substrate-binding positions include D28, H90, and Y112 to N114.

It belongs to the RbsD / FucU family. RbsD subfamily. In terms of assembly, homodecamer.

The protein localises to the cytoplasm. It carries out the reaction beta-D-ribopyranose = beta-D-ribofuranose. Its pathway is carbohydrate metabolism; D-ribose degradation; D-ribose 5-phosphate from beta-D-ribopyranose: step 1/2. Catalyzes the interconversion of beta-pyran and beta-furan forms of D-ribose. In Corynebacterium glutamicum (strain ATCC 13032 / DSM 20300 / JCM 1318 / BCRC 11384 / CCUG 27702 / LMG 3730 / NBRC 12168 / NCIMB 10025 / NRRL B-2784 / 534), this protein is D-ribose pyranase.